We begin with the raw amino-acid sequence, 496 residues long: Maturase K (496 aa).

The protein belongs to the intron maturase 2 family. MatK subfamily.

Its subcellular location is the plastid. The protein resides in the chloroplast. In terms of biological role, usually encoded in the trnK tRNA gene intron. Probably assists in splicing its own and other chloroplast group II introns. The chain is Maturase K from Paeonia officinalis (Common peony).